Consider the following 396-residue polypeptide: S-adenosylmethionine synthase (396 aa).

His-14 is an ATP binding site. Position 16 (Asp-16) interacts with Mg(2+). Residue Glu-42 coordinates K(+). Glu-55 and Gln-98 together coordinate L-methionine. The flexible loop stretch occupies residues 98 to 108; sequence QSPDIAMGVDK. ATP-binding positions include 174–176, 240–241, Asp-249, 255–256, Ala-272, and Lys-276; these read DGK, RF, and RK. Asp-249 is a binding site for L-methionine. Lys-280 lines the L-methionine pocket.

The protein belongs to the AdoMet synthase family. As to quaternary structure, homotetramer; dimer of dimers. Mg(2+) is required as a cofactor. Requires K(+) as cofactor.

It is found in the cytoplasm. The catalysed reaction is L-methionine + ATP + H2O = S-adenosyl-L-methionine + phosphate + diphosphate. Its pathway is amino-acid biosynthesis; S-adenosyl-L-methionine biosynthesis; S-adenosyl-L-methionine from L-methionine: step 1/1. Functionally, catalyzes the formation of S-adenosylmethionine (AdoMet) from methionine and ATP. The overall synthetic reaction is composed of two sequential steps, AdoMet formation and the subsequent tripolyphosphate hydrolysis which occurs prior to release of AdoMet from the enzyme. In Caldicellulosiruptor saccharolyticus (strain ATCC 43494 / DSM 8903 / Tp8T 6331), this protein is S-adenosylmethionine synthase.